An 88-amino-acid chain; its full sequence is Putative regulatory protein Npun_R3866 (88 aa).

Belongs to the RemA family.

This Nostoc punctiforme (strain ATCC 29133 / PCC 73102) protein is Putative regulatory protein Npun_R3866.